Here is a 62-residue protein sequence, read N- to C-terminus: U10-hottentoxin-Hj3a (62 aa).

Residues 1–22 (MQKLLIILILFCILKFNVDVEG) form the signal peptide. Disulfide bonds link Cys-28–Cys-46, Cys-33–Cys-59, and Cys-37–Cys-61.

This sequence belongs to the short scorpion toxin superfamily. Potassium channel inhibitor family. Alpha-KTx 23 subfamily. Expressed by the venom gland.

It localises to the secreted. May block potassium channels. The polypeptide is U10-hottentoxin-Hj3a (Hottentotta judaicus (Black scorpion)).